The primary structure comprises 190 residues: UPF0340 protein BCE33L5016 (190 aa).

The protein belongs to the UPF0340 family.

This Bacillus cereus (strain ZK / E33L) protein is UPF0340 protein BCE33L5016.